The sequence spans 252 residues: Probable endonuclease 4 (252 aa).

Zn(2+)-binding residues include histidine 56, histidine 96, glutamate 129, aspartate 162, histidine 165, histidine 191, aspartate 204, histidine 206, and glutamate 233.

The protein belongs to the AP endonuclease 2 family. Zn(2+) serves as cofactor.

It catalyses the reaction Endonucleolytic cleavage to 5'-phosphooligonucleotide end-products.. Endonuclease IV plays a role in DNA repair. It cleaves phosphodiester bonds at apurinic or apyrimidinic (AP) sites, generating a 3'-hydroxyl group and a 5'-terminal sugar phosphate. This chain is Probable endonuclease 4, found in Mycobacterium leprae (strain Br4923).